A 220-amino-acid polypeptide reads, in one-letter code: Fructose-6-phosphate aldolase (220 aa).

The active-site Schiff-base intermediate with substrate is K85.

The protein belongs to the transaldolase family. Type 3A subfamily. Homodecamer.

It localises to the cytoplasm. The catalysed reaction is beta-D-fructose 6-phosphate = dihydroxyacetone + D-glyceraldehyde 3-phosphate. Catalyzes the reversible formation of fructose 6-phosphate from dihydroxyacetone and D-glyceraldehyde 3-phosphate via an aldolization reaction. The protein is Fructose-6-phosphate aldolase of Salmonella typhi.